The following is a 148-amino-acid chain: Protein F15 (148 aa).

It belongs to the poxviridae F15 protein family.

This Fowlpox virus (strain NVSL) (FPV) protein is Protein F15.